A 142-amino-acid polypeptide reads, in one-letter code: Large ribosomal subunit protein uL13 (142 aa).

It belongs to the universal ribosomal protein uL13 family. In terms of assembly, part of the 50S ribosomal subunit.

This protein is one of the early assembly proteins of the 50S ribosomal subunit, although it is not seen to bind rRNA by itself. It is important during the early stages of 50S assembly. The sequence is that of Large ribosomal subunit protein uL13 from Buchnera aphidicola subsp. Cinara cedri (strain Cc).